A 351-amino-acid polypeptide reads, in one-letter code: Ribosomal RNA small subunit methyltransferase H (351 aa).

Residues 48–50, aspartate 67, phenylalanine 94, aspartate 115, and glutamine 122 contribute to the S-adenosyl-L-methionine site; that span reads GGY. Positions 298-351 are disordered; that stretch reads GPVLPSEAETEVNPRARSAKLRAGERTDGPAPPPLSAIETLASLPAPQGRGTRR.

Belongs to the methyltransferase superfamily. RsmH family.

It is found in the cytoplasm. The enzyme catalyses cytidine(1402) in 16S rRNA + S-adenosyl-L-methionine = N(4)-methylcytidine(1402) in 16S rRNA + S-adenosyl-L-homocysteine + H(+). Its function is as follows. Specifically methylates the N4 position of cytidine in position 1402 (C1402) of 16S rRNA. The protein is Ribosomal RNA small subunit methyltransferase H of Methylorubrum populi (strain ATCC BAA-705 / NCIMB 13946 / BJ001) (Methylobacterium populi).